The following is a 160-amino-acid chain: UPF0225 protein PP_1119 (160 aa).

This sequence belongs to the UPF0225 family.

In Pseudomonas putida (strain ATCC 47054 / DSM 6125 / CFBP 8728 / NCIMB 11950 / KT2440), this protein is UPF0225 protein PP_1119.